The following is a 335-amino-acid chain: Phosphate acyltransferase (335 aa).

This sequence belongs to the PlsX family. In terms of assembly, homodimer. Probably interacts with PlsY.

It localises to the cytoplasm. The catalysed reaction is a fatty acyl-[ACP] + phosphate = an acyl phosphate + holo-[ACP]. It participates in lipid metabolism; phospholipid metabolism. In terms of biological role, catalyzes the reversible formation of acyl-phosphate (acyl-PO(4)) from acyl-[acyl-carrier-protein] (acyl-ACP). This enzyme utilizes acyl-ACP as fatty acyl donor, but not acyl-CoA. This Streptococcus pyogenes serotype M28 (strain MGAS6180) protein is Phosphate acyltransferase.